The following is a 40-amino-acid chain: Photosystem II reaction center protein J (40 aa).

A helical membrane pass occupies residues 8–28; sequence IPLWLIGTVTGTLVIGLIGIF.

This sequence belongs to the PsbJ family. In terms of assembly, PSII is composed of 1 copy each of membrane proteins PsbA, PsbB, PsbC, PsbD, PsbE, PsbF, PsbH, PsbI, PsbJ, PsbK, PsbL, PsbM, PsbT, PsbX, PsbY, PsbZ, Psb30/Ycf12, at least 3 peripheral proteins of the oxygen-evolving complex and a large number of cofactors. It forms dimeric complexes.

Its subcellular location is the plastid. The protein localises to the chloroplast thylakoid membrane. Functionally, one of the components of the core complex of photosystem II (PSII). PSII is a light-driven water:plastoquinone oxidoreductase that uses light energy to abstract electrons from H(2)O, generating O(2) and a proton gradient subsequently used for ATP formation. It consists of a core antenna complex that captures photons, and an electron transfer chain that converts photonic excitation into a charge separation. The polypeptide is Photosystem II reaction center protein J (Cycas taitungensis (Prince sago)).